Consider the following 419-residue polypeptide: MLNQFPGQYSNNIFCFPPIESETKSGKKASWIICVQVVQHNTIIPITDEMFSTDVKDAVAEIFTKFFVEEGAVRISKMTRVTEGKNLGKKNATTVVHQAFKDALSKYNRHARQKRGAHTNRGMIPPMLVKYFNIIPKTFFEEETDPIVQRKRNGVRAVACQQGDGCILLYSRTEKEFLGLDNIKKELKQLYLFIDVRVYLDGELYLHRKPLQWIAGQANAKTDSSELHFYVFDCFWSDQLQMPSNKRQQLLTNIFKQKEDLTFIHQVENFSVKNVDEALRLKAQFIKEGYEGAIVRNANGPYEPGYNNYHSAHLAKLKPLLDAEFILVDYTQGKKGKDLGAILWVCELPNKKRFVVTPKHLTYADRYALFQKLTPALFKKHLYGKELTVEYAELSPKTGIPLQARAVGFREPINVLEII.

Positions 1–120 are NTD; the sequence is MLNQFPGQYS…ARQKRGAHTN (120 aa). The segment at 121 to 317 is AD domain; the sequence is RGMIPPMLVK…NYHSAHLAKL (197 aa). ATP-binding residues include Q149, K151, E203, and F232. K151 functions as the N6-AMP-lysine intermediate in the catalytic mechanism. E203 serves as a coordination point for a divalent metal cation. E291 lines the a divalent metal cation pocket. ATP-binding residues include I294 and K316. The interval 318-419 is OB domain; the sequence is KPLLDAEFIL…REPINVLEII (102 aa).

Belongs to the ATP-dependent DNA ligase family. Requires a divalent metal cation as cofactor.

Its subcellular location is the virion. It catalyses the reaction ATP + (deoxyribonucleotide)n-3'-hydroxyl + 5'-phospho-(deoxyribonucleotide)m = (deoxyribonucleotide)n+m + AMP + diphosphate.. Functionally, very low-fidelity DNA ligase that seals nicks in double-stranded DNA during DNA repair. Together with the viral repair DNA polymerase X, fills the single nucleotide gaps generated by the AP endonuclease. It is not essential for viral replication and recombination. Displays a very low adenylation activity towards DNA with 3'-dideoxy- or 3'-amino-terminated nicks compared to regular nick DNA. In Ornithodoros (relapsing fever ticks), this protein is DNA ligase (LIG).